Reading from the N-terminus, the 126-residue chain is AGGVKKPTTLSMIVAAITAMKNRKGSSVQAIRKYILANNKGINTSHLGSAMKLAFAKGLKSGVLVRLKTSAGASGATGSFRVGKAPASPKKAKKAKSPKKKSSKKSKNKSNNAKAKKSPKKKADSN.

The region spanning 5–84 (KKPTTLSMIV…GATGSFRVGK (80 aa)) is the H15 domain. Residues 74-126 (SGATGSFRVGKAPASPKKAKKAKSPKKKSSKKSKNKSNNAKAKKSPKKKADSN) form a disordered region. Positions 90 to 120 (KKAKKAKSPKKKSSKKSKNKSNNAKAKKSPK) are enriched in basic residues.

Post-translationally, OE2 and OE3 are produced by post-translational cleavage of a common precursor. In terms of tissue distribution, sperm.

It is found in the nucleus. It localises to the chromosome. Functionally, linker histones are implicated in chromatin remodeling and/or transcriptional regulation during spermiogenesis, the process of spermatid maturation into spermatozoa. Protamines substitute for histones in the chromatin of sperm during the haploid phase of spermatogenesis. They compact sperm DNA into a highly condensed, stable and inactive complex. The chain is Sperm-specific H1/protamine-like protein type 2 from Ostrea edulis (Native oyster).